The following is a 98-amino-acid chain: NADH-ubiquinone oxidoreductase chain 4L (98 aa).

Transmembrane regions (helical) follow at residues 1-21 (MSMVHMNIMMAFAVSLVGLLM), 29-49 (SLLCLEGMMLSLFVMAALTIL), and 61-81 (IILLVFAACEAALGLSLLVMV).

This sequence belongs to the complex I subunit 4L family. As to quaternary structure, core subunit of respiratory chain NADH dehydrogenase (Complex I) which is composed of 45 different subunits.

It localises to the mitochondrion inner membrane. The enzyme catalyses a ubiquinone + NADH + 5 H(+)(in) = a ubiquinol + NAD(+) + 4 H(+)(out). In terms of biological role, core subunit of the mitochondrial membrane respiratory chain NADH dehydrogenase (Complex I) which catalyzes electron transfer from NADH through the respiratory chain, using ubiquinone as an electron acceptor. Part of the enzyme membrane arm which is embedded in the lipid bilayer and involved in proton translocation. The chain is NADH-ubiquinone oxidoreductase chain 4L (MT-ND4L) from Bos mutus grunniens (Wild yak).